The chain runs to 213 residues: MADSTSGVAEAKADTLREQHLQLLLEIEPAKRCSCPLAGPDSAVEDVHTQLDGDVCHAEVTVGDGDASKVVHATTSVGDDCLCRAFAEFECVPRIRRADGECIVVETYLSDRAVITDLVERLDELTERVCLRRLTSDGRGDSTESKTATIDLSSLTAKQREAALIAVHHGYYETPRRTELATLAEALGISKSALSQRLNAVEAKLATAVFDSE.

Residues 155–206 (LTAKQREAALIAVHHGYYETPRRTELATLAEALGISKSALSQRLNAVEAKLA) form the HTH bat-type domain.

Functionally, involved in activating dmsEABCD gene expression related to dimethyl sulfoxide (DMSO) reductase. Required for anaerobic respiration on dimethyl sulfoxide (DMSO). This is Dimethyl sulfoxide reductase transcriptional activator from Haloferax volcanii (strain ATCC 29605 / DSM 3757 / JCM 8879 / NBRC 14742 / NCIMB 2012 / VKM B-1768 / DS2) (Halobacterium volcanii).